A 393-amino-acid chain; its full sequence is S-adenosylmethionine synthase (393 aa).

Glutamate 10 provides a ligand contact to Mg(2+). Histidine 16 serves as a coordination point for ATP. Glutamate 44 is a K(+) binding site. Positions 57 and 100 each coordinate L-methionine. Residues 168-170, 236-239, aspartate 247, 253-254, alanine 270, lysine 274, and lysine 278 each bind ATP; these read DGK, SGRF, and RK. Aspartate 247 contacts L-methionine. Lysine 278 provides a ligand contact to L-methionine.

Belongs to the AdoMet synthase family. As to quaternary structure, homotetramer. Requires Mn(2+) as cofactor. The cofactor is Mg(2+). It depends on Co(2+) as a cofactor. K(+) is required as a cofactor.

Its subcellular location is the cytoplasm. The catalysed reaction is L-methionine + ATP + H2O = S-adenosyl-L-methionine + phosphate + diphosphate. It functions in the pathway amino-acid biosynthesis; S-adenosyl-L-methionine biosynthesis; S-adenosyl-L-methionine from L-methionine: step 1/1. Catalyzes the formation of S-adenosylmethionine from methionine and ATP. The reaction comprises two steps that are both catalyzed by the same enzyme: formation of S-adenosylmethionine (AdoMet) and triphosphate, and subsequent hydrolysis of the triphosphate. The protein is S-adenosylmethionine synthase (METK) of Musa acuminata (Banana).